Consider the following 208-residue polypeptide: Large ribosomal subunit protein uL4 (208 aa).

A disordered region spans residues arginine 44–glycine 76. The span at glycine 60 to glycine 76 shows a compositional bias: basic residues.

This sequence belongs to the universal ribosomal protein uL4 family. Part of the 50S ribosomal subunit.

In terms of biological role, one of the primary rRNA binding proteins, this protein initially binds near the 5'-end of the 23S rRNA. It is important during the early stages of 50S assembly. It makes multiple contacts with different domains of the 23S rRNA in the assembled 50S subunit and ribosome. Its function is as follows. Forms part of the polypeptide exit tunnel. This Acetivibrio thermocellus (strain ATCC 27405 / DSM 1237 / JCM 9322 / NBRC 103400 / NCIMB 10682 / NRRL B-4536 / VPI 7372) (Clostridium thermocellum) protein is Large ribosomal subunit protein uL4.